The sequence spans 71 residues: Omega-conotoxin SO-3 (71 aa).

The N-terminal stretch at 1–22 (MKLTCMVIVAVLLLTACQLITA) is a signal peptide. A propeptide spanning residues 23-45 (DDSRGTQKHRTLRSKTKLSMSTR) is cleaved from the precursor. 3 disulfide bridges follow: Cys-46–Cys-61, Cys-53–Cys-65, and Cys-60–Cys-70. Cys-70 bears the Cysteine amide mark.

The protein belongs to the conotoxin O1 superfamily. Expressed by the venom duct.

Its subcellular location is the secreted. Its function is as follows. Omega-conotoxins act at presynaptic membranes, they bind and block voltage-gated calcium channels (Cav). This peptide selectively targets Cav2.2/CACNA1B (IC(50)=160 nM) voltage-gated calcium channels. When tested in mammals, this toxin displays an analgesic potency similar to MVIIA in a range of acute and chronic pain models in rodents, but has less adverse effects (tremor, diminution of spontaneous locomotor activity and bad coordinated locomotion) compared with identical dosages of MVIIA injected intrathecally. The chain is Omega-conotoxin SO-3 from Conus striatus (Striated cone).